The following is a 309-amino-acid chain: Tagatose-6-phosphate kinase (309 aa).

The protein belongs to the carbohydrate kinase PfkB family. LacC subfamily.

The catalysed reaction is D-tagatofuranose 6-phosphate + ATP = D-tagatofuranose 1,6-bisphosphate + ADP + H(+). The protein operates within carbohydrate metabolism; D-tagatose 6-phosphate degradation; D-glyceraldehyde 3-phosphate and glycerone phosphate from D-tagatose 6-phosphate: step 1/2. This chain is Tagatose-6-phosphate kinase, found in Streptococcus pneumoniae (strain P1031).